A 482-amino-acid chain; its full sequence is Serine decarboxylase 1 (482 aa).

A disordered region spans residues 36 to 55; it reads EVESPPRPAEEEGEGSPTRR. A substrate-binding site is contributed by His-200. N6-(pyridoxal phosphate)lysine is present on Lys-312.

The protein belongs to the group II decarboxylase family. Pyridoxal 5'-phosphate serves as cofactor.

The enzyme catalyses L-serine + H(+) = ethanolamine + CO2. Functionally, catalyzes the biosynthesis of ethanolamine from serine. Decarboxylation of free serine is the major source of ethanolamine production in plants and ethanolamine metabolism is crucial for the synthesis of choline, phosphatidylethanolamine (PE) and phosphatidylcholine (PC), and thus for plant growth. This Oryza sativa subsp. japonica (Rice) protein is Serine decarboxylase 1 (SDC1).